A 192-amino-acid polypeptide reads, in one-letter code: Fe/S biogenesis protein NfuA (192 aa).

2 residues coordinate [4Fe-4S] cluster: Cys-149 and Cys-152.

The protein belongs to the NfuA family. Homodimer. Requires [4Fe-4S] cluster as cofactor.

Its function is as follows. Involved in iron-sulfur cluster biogenesis. Binds a 4Fe-4S cluster, can transfer this cluster to apoproteins, and thereby intervenes in the maturation of Fe/S proteins. Could also act as a scaffold/chaperone for damaged Fe/S proteins. In Shewanella pealeana (strain ATCC 700345 / ANG-SQ1), this protein is Fe/S biogenesis protein NfuA.